Consider the following 188-residue polypeptide: U1 small nuclear ribonucleoprotein C-2 (188 aa).

Residues 4 to 36 form a Matrin-type zinc finger; it reads YYCDYCDVFLVSESPSVRKAHNSGRNHLTNVRD. Residues 57–188 form a disordered region; it reads FETGGGNSTS…MNPDRARQLG (132 aa). Residues 72–82 show a composition bias toward pro residues; sequence GNPPGSQPGPP. The span at 109 to 124 shows a compositional bias: low complexity; the sequence is AMLALMNGQNGMSSPG. Over residues 125–141 the composition is skewed to pro residues; that stretch reads SGPPPMRFAGPPIPNNM.

The protein belongs to the U1 small nuclear ribonucleoprotein C family. In terms of assembly, U1 snRNP is composed of the 7 core Sm proteins B/B', D1, D2, D3, E, F and G that assemble in a heptameric protein ring on the Sm site of the small nuclear RNA to form the core snRNP, and at least 3 U1 snRNP-specific proteins U1-70K, U1-A and U1-C. U1-C interacts with U1 snRNA and the 5' splice-site region of the pre-mRNA.

It is found in the nucleus. Functionally, component of the spliceosomal U1 snRNP, which is essential for recognition of the pre-mRNA 5' splice-site and the subsequent assembly of the spliceosome. U1-C is directly involved in initial 5' splice-site recognition for both constitutive and regulated alternative splicing. The interaction with the 5' splice-site seems to precede base-pairing between the pre-mRNA and the U1 snRNA. Stimulates commitment or early (E) complex formation by stabilizing the base pairing of the 5' end of the U1 snRNA and the 5' splice-site region. This Puccinia graminis f. sp. tritici (strain CRL 75-36-700-3 / race SCCL) (Black stem rust fungus) protein is U1 small nuclear ribonucleoprotein C-2.